The primary structure comprises 23 residues: Aurein-4.4 (23 aa).

The protein belongs to the frog skin active peptide (FSAP) family. Aurein subfamily. In terms of tissue distribution, expressed by the skin dorsal glands.

The protein localises to the secreted. Functionally, has no antimicrobial or anticancer activity. The chain is Aurein-4.4 from Ranoidea aurea (Green and golden bell frog).